Reading from the N-terminus, the 167-residue chain is Plastocyanin major isoform, chloroplastic (167 aa).

A chloroplast-targeting transit peptide spans 1–52 (MASVTSATVAIPSFTGLKASTIKSSATVRIQTAAVASPKLTVKSSLKNFGVA). A thylakoid-targeting transit peptide spans 53–68 (AVAAAASIALAGNAMA). The region spanning 69–167 (IEVLLGGGDG…AGMVGKVTVN (99 aa)) is the Plastocyanin-like domain. Cu cation is bound by residues His-105, Cys-152, His-155, and Met-160.

This sequence belongs to the plastocyanin family. Cu(2+) serves as cofactor.

It is found in the plastid. The protein localises to the chloroplast thylakoid membrane. Participates in electron transfer between P700 and the cytochrome b6-f complex in photosystem I. Seems to be the major plastocyanin in Arabidopsis. The chain is Plastocyanin major isoform, chloroplastic (DRT112) from Arabidopsis thaliana (Mouse-ear cress).